A 70-amino-acid chain; its full sequence is Small, acid-soluble spore protein 1 (70 aa).

This sequence belongs to the alpha/beta-type SASP family.

SASP are bound to spore DNA. They are double-stranded DNA-binding proteins that cause DNA to change to an a-like conformation. They protect the DNA backbone from chemical and enzymatic cleavage and are thus involved in dormant spore's high resistance to UV light. This is Small, acid-soluble spore protein 1 (sasP-1) from Bacillus cereus.